Reading from the N-terminus, the 219-residue chain is Probable transcription factor At1g55950 (219 aa).

Residues 9 to 77 (ASHSLKSLMA…DEKMETEEEG (69 aa)) are disordered. A compositionally biased stretch (basic residues) spans 17-30 (MAKKNKRSQQKNKC). Over residues 31 to 48 (LKPEKDPSTVKRLLEDPP) the composition is skewed to basic and acidic residues. Residues 65 to 77 (YGDDEKMETEEEG) show a composition bias toward acidic residues.

This sequence belongs to the GeBP family.

This Arabidopsis thaliana (Mouse-ear cress) protein is Probable transcription factor At1g55950.